The following is a 90-amino-acid chain: MANVNGYVDLLEGIPDETKEEMVELNNTLDKLDSCLDALEEQNDSLNAKLRDLLQSSQQARQELQAERQSLETEQNTEPSTKSDQEQKKQ.

Residues 16–78 (DETKEEMVEL…QSLETEQNTE (63 aa)) adopt a coiled-coil conformation. A disordered region spans residues 57–90 (SQQARQELQAERQSLETEQNTEPSTKSDQEQKKQ). Residues 81–90 (TKSDQEQKKQ) show a composition bias toward basic and acidic residues.

Belongs to the UPF0184 (EST00098) family.

This is UPF0184 protein from Branchiostoma floridae (Florida lancelet).